We begin with the raw amino-acid sequence, 418 residues long: L-rhamnose isomerase (418 aa).

His262, Asp294, and Asp296 together coordinate Mn(2+).

It belongs to the rhamnose isomerase family. Homotetramer. The cofactor is Mn(2+).

It is found in the cytoplasm. It catalyses the reaction L-rhamnopyranose = L-rhamnulose. The protein operates within carbohydrate degradation; L-rhamnose degradation; glycerone phosphate from L-rhamnose: step 1/3. Functionally, catalyzes the interconversion of L-rhamnose and L-rhamnulose. The protein is L-rhamnose isomerase of Yersinia pestis bv. Antiqua (strain Antiqua).